The primary structure comprises 475 residues: Aspartyl/glutamyl-tRNA(Asn/Gln) amidotransferase subunit B (475 aa).

Belongs to the GatB/GatE family. GatB subfamily. As to quaternary structure, heterotrimer of A, B and C subunits.

The catalysed reaction is L-glutamyl-tRNA(Gln) + L-glutamine + ATP + H2O = L-glutaminyl-tRNA(Gln) + L-glutamate + ADP + phosphate + H(+). It carries out the reaction L-aspartyl-tRNA(Asn) + L-glutamine + ATP + H2O = L-asparaginyl-tRNA(Asn) + L-glutamate + ADP + phosphate + 2 H(+). Functionally, allows the formation of correctly charged Asn-tRNA(Asn) or Gln-tRNA(Gln) through the transamidation of misacylated Asp-tRNA(Asn) or Glu-tRNA(Gln) in organisms which lack either or both of asparaginyl-tRNA or glutaminyl-tRNA synthetases. The reaction takes place in the presence of glutamine and ATP through an activated phospho-Asp-tRNA(Asn) or phospho-Glu-tRNA(Gln). This Chlorobium limicola (strain DSM 245 / NBRC 103803 / 6330) protein is Aspartyl/glutamyl-tRNA(Asn/Gln) amidotransferase subunit B.